We begin with the raw amino-acid sequence, 363 residues long: NAD(P)H-quinone oxidoreductase subunit 1, chloroplastic (363 aa).

Helical transmembrane passes span 30 to 50 (LVPI…IVWL), 98 to 118 (FSIG…VIPF), 129 to 149 (VGVF…LMSG), 165 to 185 (AAQS…ISLL), 253 to 273 (FAFF…FVTI), 303 to 323 (TTTE…ISIT), and 336 to 356 (LLNL…LLTT).

It belongs to the complex I subunit 1 family. As to quaternary structure, NDH is composed of at least 16 different subunits, 5 of which are encoded in the nucleus.

It is found in the plastid. The protein localises to the chloroplast thylakoid membrane. It catalyses the reaction a plastoquinone + NADH + (n+1) H(+)(in) = a plastoquinol + NAD(+) + n H(+)(out). It carries out the reaction a plastoquinone + NADPH + (n+1) H(+)(in) = a plastoquinol + NADP(+) + n H(+)(out). In terms of biological role, NDH shuttles electrons from NAD(P)H:plastoquinone, via FMN and iron-sulfur (Fe-S) centers, to quinones in the photosynthetic chain and possibly in a chloroplast respiratory chain. The immediate electron acceptor for the enzyme in this species is believed to be plastoquinone. Couples the redox reaction to proton translocation, and thus conserves the redox energy in a proton gradient. In Pelargonium hortorum (Common geranium), this protein is NAD(P)H-quinone oxidoreductase subunit 1, chloroplastic.